Here is a 478-residue protein sequence, read N- to C-terminus: tRNA(Ile)-lysidine synthase (478 aa).

Residue 27-32 (SGGSDS) participates in ATP binding.

Belongs to the tRNA(Ile)-lysidine synthase family.

The protein resides in the cytoplasm. The catalysed reaction is cytidine(34) in tRNA(Ile2) + L-lysine + ATP = lysidine(34) in tRNA(Ile2) + AMP + diphosphate + H(+). Ligates lysine onto the cytidine present at position 34 of the AUA codon-specific tRNA(Ile) that contains the anticodon CAU, in an ATP-dependent manner. Cytidine is converted to lysidine, thus changing the amino acid specificity of the tRNA from methionine to isoleucine. This is tRNA(Ile)-lysidine synthase from Rickettsia rickettsii (strain Iowa).